The primary structure comprises 186 residues: NADH-quinone oxidoreductase subunit B (186 aa).

Residues Cys-44, Cys-45, Cys-110, and Cys-139 each contribute to the [4Fe-4S] cluster site.

Belongs to the complex I 20 kDa subunit family. In terms of assembly, NDH-1 is composed of 14 different subunits. Subunits NuoB, C, D, E, F, and G constitute the peripheral sector of the complex. [4Fe-4S] cluster is required as a cofactor.

The protein localises to the cell inner membrane. The catalysed reaction is a quinone + NADH + 5 H(+)(in) = a quinol + NAD(+) + 4 H(+)(out). In terms of biological role, NDH-1 shuttles electrons from NADH, via FMN and iron-sulfur (Fe-S) centers, to quinones in the respiratory chain. The immediate electron acceptor for the enzyme in this species is believed to be ubiquinone. Couples the redox reaction to proton translocation (for every two electrons transferred, four hydrogen ions are translocated across the cytoplasmic membrane), and thus conserves the redox energy in a proton gradient. This chain is NADH-quinone oxidoreductase subunit B, found in Leptospira borgpetersenii serovar Hardjo-bovis (strain JB197).